We begin with the raw amino-acid sequence, 276 residues long: uncharacterized protein (276 aa).

A disordered region spans residues 1 to 70; it reads MSKAKSPIKS…SDDDEEDSPN (70 aa). The span at 21-35 shows a compositional bias: basic and acidic residues; the sequence is VLREKKVKDAEKAEH. Positions 105-183 constitute an RRM domain; it reads GVLYVGRLPH…KLLQCKVIPE (79 aa). A disordered region spans residues 249-276; sequence VSHPKAASPVASKKSSKKKNKKVLAAHK. Residues 252 to 261 are compositionally biased toward low complexity; the sequence is PKAASPVASK. Over residues 262–276 the composition is skewed to basic residues; it reads KSSKKKNKKVLAAHK.

Its subcellular location is the nucleus. It is found in the nucleolus. This is an uncharacterized protein from Schizosaccharomyces pombe (strain 972 / ATCC 24843) (Fission yeast).